A 114-amino-acid polypeptide reads, in one-letter code: Probable acid stress chaperone HdeA (114 aa).

The first 26 residues, 1-26, serve as a signal peptide directing secretion; the sequence is MIKALFNKNTALAAVAILALSGGAMA. Cysteine 46 and cysteine 94 are joined by a disulfide.

Belongs to the HdeA family.

It is found in the periplasm. Required for optimal acid stress protection. Exhibits a chaperone-like activity only at low pH by suppressing non-specifically the aggregation of denaturated periplasmic proteins. Contributes to acid resistance. Not required for wild-type virulence in the BALB/c mouse model. In Brucella abortus (strain 2308), this protein is Probable acid stress chaperone HdeA.